The chain runs to 141 residues: Protein nfe1 (141 aa).

This sequence to the N-terminal of nitrogenase iron protein (NifH). Has lost the ATP-binding site.

Functionally, responsible for the nodulation efficiency and competitive ability of strain GR4 on alfalfa roots. The protein is Protein nfe1 (nfe1) of Rhizobium meliloti (Ensifer meliloti).